Reading from the N-terminus, the 371-residue chain is Vasopressin V2 receptor (371 aa).

Residues 1–27 (MILVSTTSAVPGALSSPSSPSNSSQEE) are disordered. The Extracellular portion of the chain corresponds to 1-38 (MILVSTTSAVPGALSSPSSPSNSSQEELLDDRDPLLVR). Residues 15 to 24 (SSPSSPSNSS) show a composition bias toward low complexity. Residue asparagine 22 is glycosylated (N-linked (GlcNAc...) asparagine). The chain crosses the membrane as a helical span at residues 39 to 63 (AELALLSTIFVAVALSNGLVLGALI). Residues 64–77 (RRGRRGRWAPMHVF) are Cytoplasmic-facing. Residues 78–98 (ISHLCLADLAVALFQVLPQLA) traverse the membrane as a helical segment. Residues 99-113 (WDATDRFHGPDALCR) are Extracellular-facing. Residues 114–135 (AVKYLQMVGMYASSYMILAMTL) form a helical membrane-spanning segment. The Cytoplasmic portion of the chain corresponds to 136–159 (DRHRAICRPMLAYRHGGGARWNRP). A helical transmembrane segment spans residues 160–180 (VLVAWAFSLLLSLPQLFIFAQ). At 181 to 200 (RDVGNGSGVFDCWARFAEPW) the chain is on the extracellular side. Residue asparagine 185 is glycosylated (N-linked (GlcNAc...) asparagine). The chain crosses the membrane as a helical span at residues 201-220 (GLRAYVTWIALMVFVAPALG). At 221 to 271 (IAACQVLIFREIHASLVPGPSERAGRRRRGHRTGSPSEGAHVSAAMAKTVR) the chain is on the cytoplasmic side. The disordered stretch occupies residues 240 to 259 (PSERAGRRRRGHRTGSPSEG). The helical transmembrane segment at 272 to 293 (MTLVIVIVYVLCWAPFFLVQLW) threads the bilayer. The Extracellular portion of the chain corresponds to 294 to 308 (AAWDPEAPLERPPFV). A helical transmembrane segment spans residues 309–328 (LLMLLASLNSCTNPWIYASF). Residues 329 to 371 (SSSVSSELRSLLCCAQRHTTHSLGPQDESCATASSSLMKDTPS) lie on the Cytoplasmic side of the membrane. 2 S-palmitoyl cysteine lipidation sites follow: cysteine 341 and cysteine 342. The disordered stretch occupies residues 349 to 371 (HSLGPQDESCATASSSLMKDTPS). A compositionally biased stretch (polar residues) spans 357–371 (SCATASSSLMKDTPS).

This sequence belongs to the G-protein coupled receptor 1 family. Vasopressin/oxytocin receptor subfamily. As to quaternary structure, interacts with ARRDC4. Identified in a complex containing at least ARRDC4, V2R and HGS. Interacts with TMEM147. As to expression, highly expressed in kidney (at protein level) and moderately expressed in liver (at protein level). No or extremely low expression in left ventricule, muscle, bone and brain (at protein level).

The protein resides in the cell membrane. Functionally, receptor for arginine vasopressin. The activity of this receptor is mediated by G proteins which activate adenylate cyclase. Involved in renal water reabsorption. The sequence is that of Vasopressin V2 receptor (Avpr2) from Mus musculus (Mouse).